The sequence spans 212 residues: Probable transaldolase (212 aa).

The Schiff-base intermediate with substrate role is filled by K84.

This sequence belongs to the transaldolase family. Type 3B subfamily.

The protein resides in the cytoplasm. It carries out the reaction D-sedoheptulose 7-phosphate + D-glyceraldehyde 3-phosphate = D-erythrose 4-phosphate + beta-D-fructose 6-phosphate. It functions in the pathway carbohydrate degradation; pentose phosphate pathway; D-glyceraldehyde 3-phosphate and beta-D-fructose 6-phosphate from D-ribose 5-phosphate and D-xylulose 5-phosphate (non-oxidative stage): step 2/3. Functionally, transaldolase is important for the balance of metabolites in the pentose-phosphate pathway. The sequence is that of Probable transaldolase from Bacillus pumilus (strain SAFR-032).